Here is a 151-residue protein sequence, read N- to C-terminus: MATIESRLVEMLTVPVEALGFELWGIEFVHAGRHSIVRVFIDSEKGIFIEDCAETSRQVSAVLDVEDPITTEYTLEVSSPGVDRPLFTAAQYQAYIGEDAKVQLTMPVAGSRNLKGVISKVEGQILTLNVDGKDLIIALDNIRKGNIIAKF.

It belongs to the RimP family.

The protein localises to the cytoplasm. Its function is as follows. Required for maturation of 30S ribosomal subunits. The polypeptide is Ribosome maturation factor RimP (Shewanella denitrificans (strain OS217 / ATCC BAA-1090 / DSM 15013)).